The sequence spans 1375 residues: DNA-directed RNA polymerase subunit beta' (1375 aa).

4 residues coordinate Zn(2+): cysteine 70, cysteine 72, cysteine 85, and cysteine 88. The Mg(2+) site is built by aspartate 461, aspartate 463, and aspartate 465. Zn(2+) contacts are provided by cysteine 797, cysteine 871, cysteine 878, and cysteine 881.

It belongs to the RNA polymerase beta' chain family. As to quaternary structure, the RNAP catalytic core consists of 2 alpha, 1 beta, 1 beta' and 1 omega subunit. When a sigma factor is associated with the core the holoenzyme is formed, which can initiate transcription. Mg(2+) is required as a cofactor. It depends on Zn(2+) as a cofactor.

The catalysed reaction is RNA(n) + a ribonucleoside 5'-triphosphate = RNA(n+1) + diphosphate. Functionally, DNA-dependent RNA polymerase catalyzes the transcription of DNA into RNA using the four ribonucleoside triphosphates as substrates. The chain is DNA-directed RNA polymerase subunit beta' from Neorickettsia sennetsu (strain ATCC VR-367 / Miyayama) (Ehrlichia sennetsu).